The chain runs to 142 residues: Hemoglobin subunit beta-C (142 aa).

The Globin domain maps to 2–142 (PNKALITGFW…VASALAHRYH (141 aa)). His59 and His88 together coordinate heme b.

Belongs to the globin family. Heterotetramer of two alpha chains and two beta chains. In terms of tissue distribution, red blood cells.

Its function is as follows. Involved in oxygen transport from the lung to the various peripheral tissues. The chain is Hemoglobin subunit beta-C (HBBC) from Ovis aries (Sheep).